A 584-amino-acid chain; its full sequence is 2-isopropylmalate synthase (584 aa).

Residues 40-314 (PRWCAVDLRD…DPQIDFSDIE (275 aa)) form the Pyruvate carboxyltransferase domain. Residues aspartate 49, histidine 253, histidine 255, and asparagine 289 each coordinate Mg(2+). The segment at 456–584 (SRDGSGSTWG…VRDAQEAAQD (129 aa)) is regulatory domain.

Belongs to the alpha-IPM synthase/homocitrate synthase family. LeuA type 2 subfamily. Homodimer. Mg(2+) is required as a cofactor.

The protein localises to the cytoplasm. It catalyses the reaction 3-methyl-2-oxobutanoate + acetyl-CoA + H2O = (2S)-2-isopropylmalate + CoA + H(+). It functions in the pathway amino-acid biosynthesis; L-leucine biosynthesis; L-leucine from 3-methyl-2-oxobutanoate: step 1/4. Functionally, catalyzes the condensation of the acetyl group of acetyl-CoA with 3-methyl-2-oxobutanoate (2-ketoisovalerate) to form 3-carboxy-3-hydroxy-4-methylpentanoate (2-isopropylmalate). This is 2-isopropylmalate synthase from Kocuria rhizophila (strain ATCC 9341 / DSM 348 / NBRC 103217 / DC2201).